Reading from the N-terminus, the 476-residue chain is tRNA sulfurtransferase (476 aa).

The THUMP domain occupies 54–156; sequence AENDIPLSKV…GKDALIYDKI (103 aa). Residues 174–175, K256, G278, and Q287 contribute to the ATP site; that span reads MV. Cysteines 334 and 433 form a disulfide. The Rhodanese domain occupies 388–470; it reads NLEDAVFIDL…LSKQKGSVDE (83 aa). C433 (cysteine persulfide intermediate) is an active-site residue.

This sequence belongs to the ThiI family.

It localises to the cytoplasm. The enzyme catalyses [ThiI sulfur-carrier protein]-S-sulfanyl-L-cysteine + a uridine in tRNA + 2 reduced [2Fe-2S]-[ferredoxin] + ATP + H(+) = [ThiI sulfur-carrier protein]-L-cysteine + a 4-thiouridine in tRNA + 2 oxidized [2Fe-2S]-[ferredoxin] + AMP + diphosphate. It carries out the reaction [ThiS sulfur-carrier protein]-C-terminal Gly-Gly-AMP + S-sulfanyl-L-cysteinyl-[cysteine desulfurase] + AH2 = [ThiS sulfur-carrier protein]-C-terminal-Gly-aminoethanethioate + L-cysteinyl-[cysteine desulfurase] + A + AMP + 2 H(+). It functions in the pathway cofactor biosynthesis; thiamine diphosphate biosynthesis. In terms of biological role, catalyzes the ATP-dependent transfer of a sulfur to tRNA to produce 4-thiouridine in position 8 of tRNAs, which functions as a near-UV photosensor. Also catalyzes the transfer of sulfur to the sulfur carrier protein ThiS, forming ThiS-thiocarboxylate. This is a step in the synthesis of thiazole, in the thiamine biosynthesis pathway. The sulfur is donated as persulfide by IscS. The polypeptide is tRNA sulfurtransferase (Thermoplasma volcanium (strain ATCC 51530 / DSM 4299 / JCM 9571 / NBRC 15438 / GSS1)).